Consider the following 116-residue polypeptide: Large ribosomal subunit protein bL20 (116 aa).

It belongs to the bacterial ribosomal protein bL20 family.

Functionally, binds directly to 23S ribosomal RNA and is necessary for the in vitro assembly process of the 50S ribosomal subunit. It is not involved in the protein synthesizing functions of that subunit. The protein is Large ribosomal subunit protein bL20 of Helicobacter pylori (strain P12).